Reading from the N-terminus, the 187-residue chain is Probable cobalt-precorrin-6B C(15)-methyltransferase (decarboxylating) (187 aa).

Residues threonine 17, 41–45, aspartate 62, and glycine 91 each bind S-adenosyl-L-methionine; that span reads GCGTG.

The protein belongs to the methyltransferase superfamily. Archaeal-type CbiT family.

It catalyses the reaction Co-precorrin-6B + S-adenosyl-L-methionine = Co-precorrin-7 + S-adenosyl-L-homocysteine + CO2. It participates in cofactor biosynthesis; adenosylcobalamin biosynthesis; cob(II)yrinate a,c-diamide from sirohydrochlorin (anaerobic route): step 8/10. Functionally, catalyzes the methylation of C-15 in cobalt-precorrin-6B followed by the decarboxylation of C-12 to form cobalt-precorrin-7. The chain is Probable cobalt-precorrin-6B C(15)-methyltransferase (decarboxylating) from Methanobrevibacter smithii (strain ATCC 35061 / DSM 861 / OCM 144 / PS).